A 276-amino-acid polypeptide reads, in one-letter code: Shikimate dehydrogenase (NADP(+)) (276 aa).

Shikimate is bound by residues 18 to 20 (SRS) and threonine 65. Lysine 69 serves as the catalytic Proton acceptor. Residues asparagine 90 and aspartate 106 each coordinate shikimate. NADP(+) is bound by residues 132 to 136 (GAGGA) and isoleucine 221. A shikimate-binding site is contributed by tyrosine 223. Glycine 244 serves as a coordination point for NADP(+).

It belongs to the shikimate dehydrogenase family. In terms of assembly, homodimer.

It carries out the reaction shikimate + NADP(+) = 3-dehydroshikimate + NADPH + H(+). Its pathway is metabolic intermediate biosynthesis; chorismate biosynthesis; chorismate from D-erythrose 4-phosphate and phosphoenolpyruvate: step 4/7. In terms of biological role, involved in the biosynthesis of the chorismate, which leads to the biosynthesis of aromatic amino acids. Catalyzes the reversible NADPH linked reduction of 3-dehydroshikimate (DHSA) to yield shikimate (SA). The sequence is that of Shikimate dehydrogenase (NADP(+)) from Paramagnetospirillum magneticum (strain ATCC 700264 / AMB-1) (Magnetospirillum magneticum).